Here is a 152-residue protein sequence, read N- to C-terminus: Ubiquitin-conjugating enzyme E2 B (152 aa).

The UBC core domain occupies 4-150; it reads PARRRLMRDF…VSAIVEQSWN (147 aa). The Glycyl thioester intermediate role is filled by Cys88.

The protein belongs to the ubiquitin-conjugating enzyme family. As to quaternary structure, interacts with RAD18, UBR2 and WAC.

It is found in the cell membrane. The protein localises to the nucleus. It catalyses the reaction S-ubiquitinyl-[E1 ubiquitin-activating enzyme]-L-cysteine + [E2 ubiquitin-conjugating enzyme]-L-cysteine = [E1 ubiquitin-activating enzyme]-L-cysteine + S-ubiquitinyl-[E2 ubiquitin-conjugating enzyme]-L-cysteine.. It participates in protein modification; protein ubiquitination. Functionally, E2 ubiquitin-conjugating enzyme that accepts ubiquitin from the ubiquitin-activating enzyme E1 and transfers it to a E3 ubiquitin-protein ligase. In vitro catalyzes 'Lys-11'-, as well as 'Lys-48'- and 'Lys-63'-linked polyubiquitination. Together with the E3 enzyme BRE1 (RNF20 and/or RNF40), plays a role in transcription regulation by catalyzing the monoubiquitination of histone H2B at 'Lys-120' to form H2BK120ub1. H2BK120ub1 gives a specific tag for epigenetic transcriptional activation, elongation by RNA polymerase II, telomeric silencing, and is also a prerequisite for H3K4me and H3K79me formation. May play a role in DNA repair. Associates to the E3 ligase RAD18 to form the UBE2B-RAD18 ubiquitin ligase complex involved in mono-ubiquitination of DNA-associated PCNA on 'Lys-164'. In association with the E3 enzyme UBR4, is involved in N-end rule-dependent protein degradation. May be involved in neurite outgrowth. The sequence is that of Ubiquitin-conjugating enzyme E2 B (UBE2B) from Bos taurus (Bovine).